Consider the following 122-residue polypeptide: Small ribosomal subunit protein bS6 (122 aa).

The disordered stretch occupies residues 96–122; that stretch reads ETAPSPMMKAVQKEDAAKSHRTEAPAA. Over residues 106 to 122 the composition is skewed to basic and acidic residues; that stretch reads VQKEDAAKSHRTEAPAA.

The protein belongs to the bacterial ribosomal protein bS6 family.

Its function is as follows. Binds together with bS18 to 16S ribosomal RNA. The sequence is that of Small ribosomal subunit protein bS6 from Herminiimonas arsenicoxydans.